The primary structure comprises 615 residues: tRNA uridine 5-carboxymethylaminomethyl modification enzyme MnmG (615 aa).

Gly11–Gly16 provides a ligand contact to FAD. Gly278 to Phe292 is an NAD(+) binding site.

Belongs to the MnmG family. In terms of assembly, homodimer. Heterotetramer of two MnmE and two MnmG subunits. FAD is required as a cofactor.

The protein resides in the cytoplasm. In terms of biological role, NAD-binding protein involved in the addition of a carboxymethylaminomethyl (cmnm) group at the wobble position (U34) of certain tRNAs, forming tRNA-cmnm(5)s(2)U34. In Myxococcus xanthus (strain DK1622), this protein is tRNA uridine 5-carboxymethylaminomethyl modification enzyme MnmG.